We begin with the raw amino-acid sequence, 72 residues long: NAD(P)H-quinone oxidoreductase subunit O (72 aa).

The protein belongs to the complex I NdhO subunit family. As to quaternary structure, NDH-1 can be composed of about 15 different subunits; different subcomplexes with different compositions have been identified which probably have different functions.

The protein localises to the cellular thylakoid membrane. The enzyme catalyses a plastoquinone + NADH + (n+1) H(+)(in) = a plastoquinol + NAD(+) + n H(+)(out). It catalyses the reaction a plastoquinone + NADPH + (n+1) H(+)(in) = a plastoquinol + NADP(+) + n H(+)(out). In terms of biological role, NDH-1 shuttles electrons from an unknown electron donor, via FMN and iron-sulfur (Fe-S) centers, to quinones in the respiratory and/or the photosynthetic chain. The immediate electron acceptor for the enzyme in this species is believed to be plastoquinone. Couples the redox reaction to proton translocation, and thus conserves the redox energy in a proton gradient. Cyanobacterial NDH-1 also plays a role in inorganic carbon-concentration. In Synechococcus elongatus (strain ATCC 33912 / PCC 7942 / FACHB-805) (Anacystis nidulans R2), this protein is NAD(P)H-quinone oxidoreductase subunit O.